Consider the following 811-residue polypeptide: G-type lectin S-receptor-like serine/threonine-protein kinase LECRK3 (811 aa).

Positions 1–23 (MAHLLFLPILQLLLLYCTKSAQA) are cleaved as a signal peptide. The 130-residue stretch at 24-153 (QLNISIGSSL…DGATKWESFG (130 aa)) folds into the Bulb-type lectin domain. The Extracellular segment spans residues 24-464 (QLNISIGSSL…DKKYWILGSS (441 aa)). N-linked (GlcNAc...) asparagine glycans are attached at residues Asn-26, Asn-39, Asn-59, Asn-219, Asn-226, Asn-237, and Asn-242. Positions 292–344 (PENICQSIQTMVGSGACGFNSYCTIDGTKNTTSCLCPQNYKFIDDKRKYKGCR) constitute an EGF-like; atypical domain. Intrachain disulfides connect Cys-296-Cys-314, Cys-308-Cys-325, Cys-327-Cys-343, Cys-389-Cys-411, and Cys-393-Cys-399. An N-linked (GlcNAc...) asparagine glycan is attached at Asn-321. In terms of domain architecture, PAN spans 352–430 (CDLDETTAML…GKMDVNVPRT (79 aa)). A helical transmembrane segment spans residues 465-485 (LLFGSSVLVNFLLISVMLFGT). The Cytoplasmic portion of the chain corresponds to 486-811 (YCSITSRKKI…DPSSYISSLA (326 aa)). One can recognise a Protein kinase domain in the interval 521–795 (GGFQEVLGTG…KVTQMLDGAV (275 aa)). Residues 527 to 535 (LGTGASGVV) and Lys-551 contribute to the ATP site. The active-site Proton acceptor is Asp-645.

Belongs to the protein kinase superfamily. Ser/Thr protein kinase family.

The protein resides in the membrane. It carries out the reaction L-seryl-[protein] + ATP = O-phospho-L-seryl-[protein] + ADP + H(+). The enzyme catalyses L-threonyl-[protein] + ATP = O-phospho-L-threonyl-[protein] + ADP + H(+). Functionally, involved in resistance against the herbivorous insect brown planthopper (N.lugens, BPH). Member of the BPH3 (BPH resistance locus 3) cluster which contains LECRK1, LECRK2 and LECRK3. In Oryza sativa subsp. indica (Rice), this protein is G-type lectin S-receptor-like serine/threonine-protein kinase LECRK3.